The following is a 614-amino-acid chain: ATP-dependent zinc metalloprotease FtsH (614 aa).

The Cytoplasmic segment spans residues 1 to 5; that stretch reads MLPIR. A helical transmembrane segment spans residues 6 to 26; sequence WFLALLAVFLAVAGLDLWFSQ. The Periplasmic portion of the chain corresponds to 27 to 127; sequence TGARPSSATG…AVSARERTAS (101 aa). Residues 128-148 form a helical membrane-spanning segment; sequence IVHAIVHPLGLITLIVGILFV. Over 149-614 the chain is Cytoplasmic; the sequence is VQRYAGRFTA…AQHPPSALAG (466 aa). Residue 214 to 221 coordinates ATP; it reads GPPGTGKT. His-436 provides a ligand contact to Zn(2+). Glu-437 is a catalytic residue. Zn(2+) is bound by residues His-440 and Asp-513.

The protein in the central section; belongs to the AAA ATPase family. This sequence in the C-terminal section; belongs to the peptidase M41 family. Homohexamer. Zn(2+) is required as a cofactor.

It localises to the cell inner membrane. Functionally, acts as a processive, ATP-dependent zinc metallopeptidase for both cytoplasmic and membrane proteins. Plays a role in the quality control of integral membrane proteins. In Opitutus terrae (strain DSM 11246 / JCM 15787 / PB90-1), this protein is ATP-dependent zinc metalloprotease FtsH.